Consider the following 308-residue polypeptide: Leucine-rich repeat-containing protein 59 (308 aa).

The Cytoplasmic portion of the chain corresponds to 1–248 (MARANGRSQN…LARRQSRLRK (248 aa)). LRR repeat units lie at residues 10–31 (NLRD…SEVP), 40–61 (KATA…FCNL), 63–84 (YIVR…FGRL), 86–107 (NLQH…FAQL), and 109–128 (SLKW…AKVA). Positions 154-223 (DHERELQRKL…NNNKKKAEEE (70 aa)) form a coiled coil. Composition is skewed to basic and acidic residues over residues 170-187 (KQRL…DREL), 194-203 (QQKERKRRDY), and 218-237 (KKAE…PKEK). Positions 170–240 (KQRLEAQQRV…VPTPKEKKLA (71 aa)) are disordered. A helical membrane pass occupies residues 249–269 (IACILLFGLMVALLGVVACRF). Topologically, residues 270 to 308 (TDLKTFEVCRSVNAVYKETLSALHSNPVLERFLQDPSSQ) are lumenal.

In terms of assembly, interacts with SGO1.

The protein localises to the microsome membrane. Its subcellular location is the endoplasmic reticulum membrane. It localises to the nucleus envelope. Its function is as follows. Required for nuclear import of FGF1. The sequence is that of Leucine-rich repeat-containing protein 59 (lrrc59) from Xenopus tropicalis (Western clawed frog).